The chain runs to 498 residues: ADP,ATP carrier protein 1 (498 aa).

The Cytoplasmic segment spans residues 1 to 33 (MNNPKNDNYLSELSKVIWPIERYENKKFLPMAF). The helical transmembrane segment at 34–54 (MMFCILLNYSTLRSIKDGFVV) threads the bilayer. A disulfide bridge links Cys37 with Cys85. Over 55–67 (TDIGAEAISFLKT) the chain is Extracellular. A helical membrane pass occupies residues 68 to 88 (YIVLPSAVIAMVIYVKLCDIL). At 89–92 (KQEN) the chain is on the cytoplasmic side. The helical transmembrane segment at 93 to 113 (VFYVITSFFLGYFALFAFVLY) threads the bilayer. At 114-147 (PYPDLVHPDPETIESWSVAYPNVKWFIRIVGKWS) the chain is on the extracellular side. Residues 148-168 (FASFYTMAELWGTMMLSLLFW) traverse the membrane as a helical segment. At 169 to 184 (QFANQITKTDEAKRFY) the chain is on the cytoplasmic side. The helical transmembrane segment at 185-205 (SMFGLLANLALPVTSVIIGYC) threads the bilayer. The Extracellular segment spans residues 206-218 (LHEKTQIVAEHLK). Residues 219–239 (FVPLFVIMITSSFLVILTYRW) traverse the membrane as a helical segment. At 240 to 279 (MNKNVLTDPRLYDPALVKEKKAKAKMSLIDSFKMIFTSKY) the chain is on the cytoplasmic side. Residues 280 to 300 (VGYIALLLIAYGVSVNLVEGV) form a helical membrane-spanning segment. Topologically, residues 301–320 (WKSKVKELYPTKEAYTIYMG) are extracellular. The chain crosses the membrane as a helical span at residues 321–341 (KFQFYQGWVAIAFMLIGSNIL). Residues 342–348 (RKVSWLT) are Cytoplasmic-facing. The helical transmembrane segment at 349-369 (AAMITPLMMLITGAAFFAFIF) threads the bilayer. The Extracellular portion of the chain corresponds to 370–379 (FDSVIAMHLT). Residues 380–400 (GILASGPLALAVMIGMIQNVL) form a helical membrane-spanning segment. Over 401–438 (SKGVKYSLFDATKNMAYIPLDKDLRVKGQAAVEVIGGR) the chain is Cytoplasmic. Residue 436-442 (GGRFGKS) participates in ATP binding. The helical transmembrane segment at 439 to 459 (FGKSGGAIIQSTFFILFPAFG) threads the bilayer. The Extracellular segment spans residues 460–465 (FVEATP). The chain crosses the membrane as a helical span at residues 466–486 (YFASIFFVIVILWIYAVKGLN). At 487–498 (KEYKVLVNKTEK) the chain is on the cytoplasmic side.

The protein belongs to the ADP/ATP translocase tlc family.

The protein resides in the cell membrane. In terms of biological role, provides the rickettsial cell with host ATP in exchange for rickettsial ADP. This is an obligate exchange system. This energy acquiring activity is an important component of rickettsial parasitism. This Rickettsia conorii (strain ATCC VR-613 / Malish 7) protein is ADP,ATP carrier protein 1 (tlcA).